The primary structure comprises 86 residues: Weak toxin 3 (86 aa).

The signal sequence occupies residues 1-23; it reads MKTLLLTLVVVTIVCLDLGYTLT. Cystine bridges form between cysteine 24–cysteine 45, cysteine 27–cysteine 32, cysteine 38–cysteine 63, cysteine 67–cysteine 78, and cysteine 79–cysteine 84.

Belongs to the three-finger toxin family. Ancestral subfamily. Orphan group II sub-subfamily. As to expression, expressed by the venom gland.

It is found in the secreted. Binds with low affinity to muscular (alpha-1-beta-1-delta-epsilon/CHRNA1-CHRNB1-CHRND-CHRNE) and very low affinity to neuronal (alpha-7/CHRNA7) nicotinic acetylcholine receptor (nAChR). This chain is Weak toxin 3, found in Bungarus candidus (Malayan krait).